Reading from the N-terminus, the 101-residue chain is Small ribosomal subunit protein uS14 (101 aa).

The protein belongs to the universal ribosomal protein uS14 family. In terms of assembly, part of the 30S ribosomal subunit. Contacts proteins S3 and S10.

In terms of biological role, binds 16S rRNA, required for the assembly of 30S particles and may also be responsible for determining the conformation of the 16S rRNA at the A site. This is Small ribosomal subunit protein uS14 from Synechococcus sp. (strain JA-2-3B'a(2-13)) (Cyanobacteria bacterium Yellowstone B-Prime).